The following is a 118-amino-acid chain: Large ribosomal subunit protein bL19 (118 aa).

The protein belongs to the bacterial ribosomal protein bL19 family.

Its function is as follows. This protein is located at the 30S-50S ribosomal subunit interface and may play a role in the structure and function of the aminoacyl-tRNA binding site. This Campylobacter jejuni subsp. jejuni serotype O:2 (strain ATCC 700819 / NCTC 11168) protein is Large ribosomal subunit protein bL19.